Consider the following 59-residue polypeptide: Large ribosomal subunit protein bL32 (59 aa).

The protein belongs to the bacterial ribosomal protein bL32 family.

This is Large ribosomal subunit protein bL32 from Rhizorhabdus wittichii (strain DSM 6014 / CCUG 31198 / JCM 15750 / NBRC 105917 / EY 4224 / RW1) (Sphingomonas wittichii).